The chain runs to 123 residues: MIMRYENQKKHKNHSLCSSSSSAMAEESSFDSSLPFFFLFLGNLGKFFFLWPLKDLDLPLKFLDFEASLCKSNCFFVKTLSFLPSYDKISLDSSSLEYDFKKASHSGIVLNSTKTVPLNFLFL.

Residues 34 to 53 (LPFFFLFLGNLGKFFFLWPL) form a helical membrane-spanning segment.

Its subcellular location is the membrane. This is an uncharacterized protein from Saccharomyces cerevisiae (strain ATCC 204508 / S288c) (Baker's yeast).